The following is a 635-amino-acid chain: Early transcription factor 70 kDa subunit (635 aa).

Residues 32–185 (RSIIDENKSV…SNIISLMSDE (154 aa)) enclose the Helicase ATP-binding domain. 45–52 (HIMGSGKT) contacts ATP. A DEXH box motif is present at residues 135–138 (DEAH). In terms of domain architecture, Helicase C-terminal spans 326–505 (KFKYFIGKIT…TLPFDIKKLL (180 aa)).

This sequence belongs to the helicase family. VETF subfamily. Heterodimer of a 70 kDa and a 82 kDa subunit.

It is found in the virion. Functionally, acts with RNA polymerase to initiate transcription from early gene promoters. A DNA-dependent ATPase activity is associated with VETF. The polypeptide is Early transcription factor 70 kDa subunit (VETFS) (Erythrocebus patas (Red guenon)).